Here is a 606-residue protein sequence, read N- to C-terminus: Homeobox protein B-H1 (606 aa).

A compositionally biased stretch (polar residues) spans 1-14 (MKDSMSILTQTPSE). Disordered stretches follow at residues 1-65 (MKDS…PAVA), 104-188 (YKQQ…HPHA), 261-340 (APAG…AFTD), and 508-606 (AAAN…QIQV). The segment covering 21–40 (QLHHHLSHHHHPALHHHPVL) has biased composition (basic residues). The segment covering 41 to 65 (QHHYSLQQQHQQQQQQQPPAPPAVA) has biased composition (low complexity). Residues 108–118 (QQHHHHHHQSH) are compositionally biased toward basic residues. A compositionally biased stretch (low complexity) spans 119 to 138 (HNNNNHSGGSSGGTSPTHHN). Basic residues predominate over residues 166-188 (HHLHPQSHPHPHPHPHSHPHPHA). Over residues 266 to 284 (ELDDSSDYHEENEDCDSDE) the composition is skewed to acidic residues. A compositionally biased stretch (gly residues) spans 286–295 (GSAGGGGGGS). Residues 297–314 (HMDDHSVCSNGGKDDDGN) are compositionally biased toward basic and acidic residues. Positions 315–325 (SIKSGSTSDMS) are enriched in polar residues. The homeobox DNA-binding region spans 331–390 (QRKARTAFTDHQLQTLEKSFERQKYLSVQERQELAHKLDLSDCQVKTWYQNRRTKWMRQT). The segment covering 513-522 (GGPPPPPPPS) has biased composition (pro residues). The segment covering 523–534 (SAAAATGGSPSP) has biased composition (low complexity). Residues 561-576 (ASPPLPLPLARPPSTP) show a composition bias toward pro residues.

Belongs to the Antp homeobox family. Abundant in the eye-antenna imaginal disk.

Its subcellular location is the nucleus. Functionally required in R1 and R6 receptor cells and primary pigment cells for normal eye development. The protein is Homeobox protein B-H1 (B-H1) of Drosophila ananassae (Fruit fly).